The primary structure comprises 247 residues: tRNA (guanine-N(1)-)-methyltransferase (247 aa).

Residues G116 and 135–140 (IGDYVL) each bind S-adenosyl-L-methionine.

This sequence belongs to the RNA methyltransferase TrmD family. In terms of assembly, homodimer.

It is found in the cytoplasm. It carries out the reaction guanosine(37) in tRNA + S-adenosyl-L-methionine = N(1)-methylguanosine(37) in tRNA + S-adenosyl-L-homocysteine + H(+). Specifically methylates guanosine-37 in various tRNAs. In Symbiobacterium thermophilum (strain DSM 24528 / JCM 14929 / IAM 14863 / T), this protein is tRNA (guanine-N(1)-)-methyltransferase.